The primary structure comprises 243 residues: Ribonuclease 3 (243 aa).

Positions 10–146 (INRFRKRFDT…FIGALYLDQG (137 aa)) constitute an RNase III domain. E59 is a binding site for Mg(2+). The active site involves D63. Mg(2+) is bound by residues D132 and E135. The active site involves E135. The DRBM domain maps to 172–241 (DFKTQFQEYV…AESAYKQLKQ (70 aa)). Basic and acidic residues predominate over residues 219 to 231 (GKGKTKKESEQRA). Residues 219–243 (GKGKTKKESEQRAAESAYKQLKQIK) are disordered.

It belongs to the ribonuclease III family. Homodimer. Mg(2+) is required as a cofactor.

It is found in the cytoplasm. It carries out the reaction Endonucleolytic cleavage to 5'-phosphomonoester.. In terms of biological role, digests double-stranded RNA. Involved in the processing of primary rRNA transcript to yield the immediate precursors to the large and small rRNAs (23S and 16S). Processes some mRNAs, and tRNAs when they are encoded in the rRNA operon. Processes pre-crRNA and tracrRNA of type II CRISPR loci if present in the organism. This Staphylococcus aureus (strain bovine RF122 / ET3-1) protein is Ribonuclease 3.